A 671-amino-acid polypeptide reads, in one-letter code: DNA ligase (671 aa).

NAD(+)-binding positions include Asp-32–Asp-36, Ser-81–Leu-82, and Glu-113. Lys-115 (N6-AMP-lysine intermediate) is an active-site residue. Residues Arg-136, Glu-173, Lys-290, and Lys-314 each coordinate NAD(+). Positions 408, 411, 426, and 432 each coordinate Zn(2+). A BRCT domain is found at Glu-593–Ser-671.

The protein belongs to the NAD-dependent DNA ligase family. LigA subfamily. Requires Mg(2+) as cofactor. It depends on Mn(2+) as a cofactor.

The enzyme catalyses NAD(+) + (deoxyribonucleotide)n-3'-hydroxyl + 5'-phospho-(deoxyribonucleotide)m = (deoxyribonucleotide)n+m + AMP + beta-nicotinamide D-nucleotide.. Its function is as follows. DNA ligase that catalyzes the formation of phosphodiester linkages between 5'-phosphoryl and 3'-hydroxyl groups in double-stranded DNA using NAD as a coenzyme and as the energy source for the reaction. It is essential for DNA replication and repair of damaged DNA. This is DNA ligase from Shigella boydii serotype 4 (strain Sb227).